Consider the following 238-residue polypeptide: Accessory gene regulator A (238 aa).

A Response regulatory domain is found at 2-125; sequence KIFICEDDPK…LRTRIIDCLE (124 aa). A 4-aspartylphosphate modification is found at Asp-59. The region spanning 143–238 is the HTH LytTR-type domain; that stretch reads IELKRGSNSV…YASVRNVKKI (96 aa).

The protein resides in the cytoplasm. Required for high-level post-exponential phase expression of a series of secreted proteins. In Staphylococcus aureus (strain COL), this protein is Accessory gene regulator A (agrA).